The primary structure comprises 691 residues: Dipeptidyl-peptidase 5 (691 aa).

Residues 1-20 (MKRTILSLLAAVSLAIPVYA) form the signal peptide. Active-site charge relay system residues include Ser-549, Asp-634, and His-666.

It belongs to the peptidase S9C family. As to quaternary structure, homodimer.

Its subcellular location is the periplasm. Functionally, catalyzes the removal of dipeptides from the N-terminus of oligopeptides. Prefers Ala and hydrophobic residues at the P1 position, and has no preference for P2 residues. Shows the highest dipeptidyl peptidase activity toward the synthetic substrate Lys-Ala-methylcoumaryl-7-amide (Lys-Ala-MCA). Is likely involved in amino acid metabolism and bacterial growth/survival of asaccharolytic P.endodontalis, that utilizes amino acids from extracellular proteinaceous nutrients as energy and carbon sources. The chain is Dipeptidyl-peptidase 5 from Porphyromonas endodontalis (strain ATCC 35406 / DSM 24491 / JCM 8526 / CCUG 16442 / BCRC 14492 / NCTC 13058 / HG 370) (Bacteroides endodontalis).